A 577-amino-acid chain; its full sequence is Anthranilate synthase alpha subunit 1, chloroplastic (577 aa).

Residues 1–34 (MASLVLSLRIAPSTPPLGLGGGRFRGRRGAVACR) constitute a chloroplast transit peptide.

This sequence belongs to the anthranilate synthase component I family. In terms of assembly, heterotetramer consisting of two non-identical subunits: a beta subunit and a large alpha subunit.

It localises to the plastid. The protein resides in the chloroplast. It carries out the reaction chorismate + L-glutamine = anthranilate + pyruvate + L-glutamate + H(+). The protein operates within amino-acid biosynthesis; L-tryptophan biosynthesis; L-tryptophan from chorismate: step 1/5. Its activity is regulated as follows. Feedback inhibition by tryptophan. Its function is as follows. Part of a heterotetrameric complex that catalyzes the two-step biosynthesis of anthranilate, an intermediate in the biosynthesis of L-tryptophan. In the first step, the glutamine-binding beta subunit of anthranilate synthase (AS) provides the glutamine amidotransferase activity which generates ammonia as a substrate that, along with chorismate, is used in the second step, catalyzed by the large alpha subunit of AS to produce anthranilate. This is Anthranilate synthase alpha subunit 1, chloroplastic from Oryza sativa subsp. japonica (Rice).